A 127-amino-acid polypeptide reads, in one-letter code: MPEVSAKGTTISKKGFKKAVTKTQKKEGRKRKRCRKESYSIYIYKVLKQVHPDTGISSKAMSIMNSFVTDIFERIAGEASRLAHYNKRSTITSREIQTAVRLLLPGELAKHAVSEGTKAVTKYTSSK.

A disordered region spans residues 1-32 (MPEVSAKGTTISKKGFKKAVTKTQKKEGRKRK). P2 is subject to N-acetylproline. Residues K7, K13, K14, K17, K18, K22, and K25 each carry the N6-acetyllysine; alternate modification. An N6-crotonyllysine; alternate mark is found at K7, K13, K14, K17, K18, K22, K25, and K36. An N6-lactoyllysine; alternate mark is found at K7 and K13. Residue K7 forms a Glycyl lysine isopeptide (Lys-Gly) (interchain with G-Cter in SUMO2); alternate linkage. 4 positions are modified to N6-lactoyllysine; alternate: K17, K18, K22, and K25. K22 participates in a covalent cross-link: Glycyl lysine isopeptide (Lys-Gly) (interchain with G-Cter in SUMO2); alternate. The residue at position 36 (K36) is an N6-succinyllysine; alternate. K36 is covalently cross-linked (Glycyl lysine isopeptide (Lys-Gly) (interchain with G-Cter in ubiquitin); alternate). Position 38 is a phosphoserine (S38). An N6-lactoyllysine; alternate modification is found at K45. K48 is modified (N6-methyllysine). The residue at position 59 (K59) is an N6,N6-dimethyllysine. The residue at position 81 (R81) is a Dimethylated arginine. An N6-acetyllysine; alternate modification is found at K87. K87 carries the N6-lactoyllysine; alternate modification. K87 is modified (N6,N6,N6-trimethyllysine; alternate). 2 positions are modified to omega-N-methylarginine: R88 and R94. N6-lactoyllysine; alternate is present on K110. At K110 the chain carries N6-methyllysine. T117 is modified (phosphothreonine). 2 positions are modified to N6-lactoyllysine; alternate: K118 and K122. N6-succinyllysine; alternate is present on residues K118 and K122. At K118 the chain carries N6-methylated lysine; alternate. K122 is covalently cross-linked (Glycyl lysine isopeptide (Lys-Gly) (interchain with G-Cter in ubiquitin); alternate).

This sequence belongs to the histone H2B family. The nucleosome is a histone octamer containing two molecules each of H2A, H2B, H3 and H4 assembled in one H3-H4 heterotetramer and two H2A-H2B heterodimers. In terms of processing, monoubiquitination at Lys-36 by the MSL1/MSL2 dimer is required for histone H3 'Lys-4' (H3K4me) and 'Lys-79' (H3K79me) methylation and transcription activation at specific gene loci, such as HOXA9 and MEIS1 loci. Similarly, monoubiquitination of Lys-122 (H2BK120Ub) by the RNF20/40 complex gives a specific tag for epigenetic transcriptional activation and is also prerequisite for histone H3 'Lys-4' and 'Lys-79' methylation. It also functions cooperatively with the FACT dimer to stimulate elongation by RNA polymerase II. H2BK120Ub also acts as a regulator of mRNA splicing: deubiquitination by USP49 is required for efficient cotranscriptional splicing of a large set of exons. Post-translationally, crotonylation (Kcr) is specifically present in male germ cells and marks testis-specific genes in post-meiotic cells, including X-linked genes that escape sex chromosome inactivation in haploid cells. Crotonylation marks active promoters and enhancers and confers resistance to transcriptional repressors. It is also associated with post-meiotically activated genes on autosomes. Acetylated during spermatogenesis. Acetylated form is most abundant in spermatogonia compared to spermatocytes and round spermatids. In terms of processing, phosphorylated at Thr-117 in spermatogonia, spermatocytes and round spermatids. Post-translationally, methylated at Lys-118 in spermatogonia, spermatocytes and round spermatids. Lactylated in macrophages by EP300/P300 by using lactoyl-CoA directly derived from endogenous or exogenous lactate, leading to stimulates gene transcription. In terms of tissue distribution, testis. Expressed in pachytene spermatocytes during meiotic prophase I in the absence of any significant DNA synthesis.

It is found in the nucleus. It localises to the chromosome. Functionally, variant histone specifically required to direct the transformation of dissociating nucleosomes to protamine in male germ cells. Entirely replaces classical histone H2B prior nucleosome to protamine transition and probably acts as a nucleosome dissociating factor that creates a more dynamic chromatin, facilitating the large-scale exchange of histones. Core component of nucleosome. Nucleosomes wrap and compact DNA into chromatin, limiting DNA accessibility to the cellular machineries which require DNA as a template. Histones thereby play a central role in transcription regulation, DNA repair, DNA replication and chromosomal stability. DNA accessibility is regulated via a complex set of post-translational modifications of histones, also called histone code, and nucleosome remodeling. The protein is Histone H2B type 1-A of Rattus norvegicus (Rat).